We begin with the raw amino-acid sequence, 145 residues long: Arginine repressor (145 aa).

Belongs to the ArgR family.

The protein localises to the cytoplasm. Its pathway is amino-acid biosynthesis; L-arginine biosynthesis [regulation]. Functionally, regulates arginine biosynthesis genes. This chain is Arginine repressor, found in Solibacter usitatus (strain Ellin6076).